Reading from the N-terminus, the 146-residue chain is Large-conductance mechanosensitive channel (146 aa).

The next 2 helical transmembrane spans lie at 12–32 and 88–108; these read AFAM…GGAF and LQAT…IKLI.

Belongs to the MscL family. As to quaternary structure, homopentamer.

It is found in the cell inner membrane. Functionally, channel that opens in response to stretch forces in the membrane lipid bilayer. May participate in the regulation of osmotic pressure changes within the cell. The sequence is that of Large-conductance mechanosensitive channel from Bacteroides fragilis (strain ATCC 25285 / DSM 2151 / CCUG 4856 / JCM 11019 / LMG 10263 / NCTC 9343 / Onslow / VPI 2553 / EN-2).